Reading from the N-terminus, the 217-residue chain is Ras-related protein RABA2c (217 aa).

GTP contacts are provided by residues 19–27, 38–44, 67–71, 125–128, and 155–157; these read GDSGVGKSN, CLESKST, DTAGQ, NKSD, and SAL. Residues 41-49 carry the Effector region motif; the sequence is SKSTIGVEF. Residues 195-217 form a disordered region; the sequence is PGQGTTINVDDTSGGAKRACCSS. S-geranylgeranyl cysteine attachment occurs at residues C214 and C215.

It belongs to the small GTPase superfamily. Rab family. In terms of tissue distribution, expressed in root tips.

The protein localises to the endosome membrane. Its subcellular location is the golgi apparatus. The protein resides in the trans-Golgi network membrane. Functionally, intracellular vesicle trafficking and protein transport. The chain is Ras-related protein RABA2c (RABA2C) from Arabidopsis thaliana (Mouse-ear cress).